The sequence spans 558 residues: CTP synthase (558 aa).

Positions 1–267 (MAKFVFVTGG…CLEMLDVLNL (267 aa)) are amidoligase domain. S13 serves as a coordination point for CTP. Residue S13 participates in UTP binding. ATP contacts are provided by residues 14–19 (SIGKGI) and D71. Mg(2+) contacts are provided by D71 and E141. Residues 148-150 (DIE), 188-193 (KTKPTQ), and K224 contribute to the CTP site. Residues 188 to 193 (KTKPTQ) and K224 each bind UTP. One can recognise a Glutamine amidotransferase type-1 domain in the interval 292 to 534 (KVALVGKYVQ…IEAAQLRLPA (243 aa)). G354 contributes to the L-glutamine binding site. The active-site Nucleophile; for glutamine hydrolysis is C381. Residues 382-385 (LGMQ), E405, and R462 each bind L-glutamine. Residues H507 and E509 contribute to the active site. The segment at 536-558 (PDEALRRQSQTNISAQEKPSRIG) is disordered. Residues 542-552 (RQSQTNISAQE) show a composition bias toward polar residues.

Belongs to the CTP synthase family. As to quaternary structure, homotetramer.

The catalysed reaction is UTP + L-glutamine + ATP + H2O = CTP + L-glutamate + ADP + phosphate + 2 H(+). It catalyses the reaction L-glutamine + H2O = L-glutamate + NH4(+). The enzyme catalyses UTP + NH4(+) + ATP = CTP + ADP + phosphate + 2 H(+). Its pathway is pyrimidine metabolism; CTP biosynthesis via de novo pathway; CTP from UDP: step 2/2. Allosterically activated by GTP, when glutamine is the substrate; GTP has no effect on the reaction when ammonia is the substrate. The allosteric effector GTP functions by stabilizing the protein conformation that binds the tetrahedral intermediate(s) formed during glutamine hydrolysis. Inhibited by the product CTP, via allosteric rather than competitive inhibition. Catalyzes the ATP-dependent amination of UTP to CTP with either L-glutamine or ammonia as the source of nitrogen. Regulates intracellular CTP levels through interactions with the four ribonucleotide triphosphates. The polypeptide is CTP synthase (Prochlorococcus marinus (strain MIT 9303)).